Reading from the N-terminus, the 305-residue chain is Protoheme IX farnesyltransferase 2 (305 aa).

A run of 7 helical transmembrane segments spans residues 38 to 58 (LITTFTGMWLALHISGLSFLG), 60 to 80 (LNTVLLTLIGSSLIIAGSCAV), 115 to 135 (ILLIALGLIMLLMTTVMAAVI), 157 to 177 (INTVVGSVSGAVPPLIGWTAV), 181 to 201 (IGVVAWVLFMILFIWQIPHFL), 236 to 256 (VACLLPLPFFLGSLGLPIVIL), and 285 to 305 (FVYSLNYMTIYFVAMVVFTLF).

This sequence belongs to the UbiA prenyltransferase family. Protoheme IX farnesyltransferase subfamily. As to quaternary structure, interacts with CtaA.

The protein localises to the cell membrane. The enzyme catalyses heme b + (2E,6E)-farnesyl diphosphate + H2O = Fe(II)-heme o + diphosphate. It participates in porphyrin-containing compound metabolism; heme O biosynthesis; heme O from protoheme: step 1/1. Converts heme B (protoheme IX) to heme O by substitution of the vinyl group on carbon 2 of heme B porphyrin ring with a hydroxyethyl farnesyl side group. The chain is Protoheme IX farnesyltransferase 2 from Bacillus velezensis (strain DSM 23117 / BGSC 10A6 / LMG 26770 / FZB42) (Bacillus amyloliquefaciens subsp. plantarum).